The primary structure comprises 219 residues: 2-hydroxy-3-keto-5-methylthiopentenyl-1-phosphate phosphatase (219 aa).

The protein belongs to the HAD-like hydrolase superfamily. MtnX family.

It carries out the reaction 2-hydroxy-5-methylsulfanyl-3-oxopent-1-enyl phosphate + H2O = 1,2-dihydroxy-5-(methylsulfanyl)pent-1-en-3-one + phosphate. It functions in the pathway amino-acid biosynthesis; L-methionine biosynthesis via salvage pathway; L-methionine from S-methyl-5-thio-alpha-D-ribose 1-phosphate: step 4/6. Dephosphorylates 2-hydroxy-3-keto-5-methylthiopentenyl-1-phosphate (HK-MTPenyl-1-P) yielding 1,2-dihydroxy-3-keto-5-methylthiopentene (DHK-MTPene). The protein is 2-hydroxy-3-keto-5-methylthiopentenyl-1-phosphate phosphatase of Bacillus cytotoxicus (strain DSM 22905 / CIP 110041 / 391-98 / NVH 391-98).